A 68-amino-acid chain; its full sequence is Putative protein YfaH (68 aa).

The sequence is that of Putative protein YfaH (yfaH) from Escherichia coli (strain K12).